The primary structure comprises 223 residues: Ribonuclease HII (223 aa).

The RNase H type-2 domain maps to methionine 1 to lysine 219. A divalent metal cation-binding residues include aspartate 7, glutamate 8, and aspartate 105.

Belongs to the RNase HII family. Mn(2+) is required as a cofactor. Requires Mg(2+) as cofactor.

It localises to the cytoplasm. The catalysed reaction is Endonucleolytic cleavage to 5'-phosphomonoester.. Its function is as follows. Endonuclease that specifically degrades the RNA of RNA-DNA hybrids. The polypeptide is Ribonuclease HII (Methanosarcina acetivorans (strain ATCC 35395 / DSM 2834 / JCM 12185 / C2A)).